The primary structure comprises 143 residues: Monothiol glutaredoxin-5, mitochondrial (143 aa).

The N-terminal 28 residues, 1–28, are a transit peptide targeting the mitochondrion; the sequence is MFGRISTRALLRPAFTHRIPSVSLSRFL. The Glutaredoxin domain maps to 33–138; it reads KQAIESAIES…KLLEDADALV (106 aa). Lys50 serves as a coordination point for glutathione. Cys58 is a [2Fe-2S] cluster binding site. Glutathione contacts are provided by residues 90-94, Ile102, and 115-116; these read REGVK and CD.

It belongs to the glutaredoxin family. Monothiol subfamily. As to quaternary structure, homodimer.

Its subcellular location is the mitochondrion matrix. Functionally, monothiol glutaredoxin involved in mitochondrial iron-sulfur (Fe/S) cluster transfer. Receives iron-sulfur clusters from scaffold protein ISU1 and mediates their transfer to apoproteins, to the 4Fe/FS cluster biosynthesis machinery, or export from mitochondrion. The sequence is that of Monothiol glutaredoxin-5, mitochondrial (GRX5) from Lachancea kluyveri (Yeast).